A 418-amino-acid chain; its full sequence is Putative ion-transport protein YfeO (418 aa).

The next 12 membrane-spanning stretches (helical) occupy residues 10–30, 54–74, 99–119, 120–140, 149–169, 186–206, 223–243, 258–278, 300–320, 322–342, 343–363, and 371–391; these read LLLS…LIVV, DSPF…GLVI, ALLG…SLGP, EHPI…RLLP, ILAS…AALI, LFAP…FFHP, ILSG…AVWC, VLVL…GGPV, DYFL…ASGF, GGRI…LHEH, VPAV…VLVV, and LFMA…CIVM.

The protein belongs to the chloride channel (TC 2.A.49) family.

The protein resides in the cell membrane. The chain is Putative ion-transport protein YfeO from Escherichia coli O17:K52:H18 (strain UMN026 / ExPEC).